The primary structure comprises 129 residues: MALPKAMRLKGHRTFDYIHKNSEKYYGKLMTFKIARSNPKILISHKNFNSLNNFKIAIAISKKVSKKAVVRNKIRRLLQDYFLKNFRKDKNHKPYWLLVNLKSSDSCNYESKLLQEFQHLIFKSGLLND.

The protein belongs to the RnpA family. In terms of assembly, consists of a catalytic RNA component (M1 or rnpB) and a protein subunit.

It catalyses the reaction Endonucleolytic cleavage of RNA, removing 5'-extranucleotides from tRNA precursor.. Its function is as follows. RNaseP catalyzes the removal of the 5'-leader sequence from pre-tRNA to produce the mature 5'-terminus. It can also cleave other RNA substrates such as 4.5S RNA. The protein component plays an auxiliary but essential role in vivo by binding to the 5'-leader sequence and broadening the substrate specificity of the ribozyme. The sequence is that of Ribonuclease P protein component from Prochlorococcus marinus (strain MIT 9515).